Consider the following 164-residue polypeptide: Proline-rich protein 2 (164 aa).

An N-terminal signal peptide occupies residues 1 to 21 (MNLKVGIAVLIIALIVPSAQP).

Component of the acid-soluble organic matrix of calcified layers of the shell (at protein level).

The protein localises to the secreted. This Lottia gigantea (Giant owl limpet) protein is Proline-rich protein 2.